We begin with the raw amino-acid sequence, 190 residues long: Cypemycin cysteine dehydrogenase (decarboxylating) (190 aa).

It belongs to the HFCD (homooligomeric flavin containing Cys decarboxylase) superfamily.

It carries out the reaction [cypemycin](1-18)-L-Cys-L-Leu-L-Val-L-Cys + A = C(3,19),S(21)-[cypemycin](1-18)-L-Ala-L-Leu-N-thioethenyl-L-valinamide + hydrogen sulfide + AH2 + CO2. Involved in the biosynthesis of the lanaridin cypemycin. The sequence is that of Cypemycin cysteine dehydrogenase (decarboxylating) from Streptomyces sp.